The primary structure comprises 88 residues: MSLQADFDQAAQDVRKLKSRPEDEELKELYGLYKQSVIGDINIACPAMLDLKGKAKWEAWNLQKGLSKEDAMCAYISKARELIEKYGI.

Residues 3–88 (LQADFDQAAQ…ARELIEKYGI (86 aa)) form the ACB domain. Residues Arg-15, 30 to 34 (YGLYK), Lys-56, and Tyr-75 each bind an acyl-CoA.

Belongs to the ACBD7 family.

Binds medium- and long-chain acyl-CoA esters. The polypeptide is Acyl-CoA-binding domain-containing protein 7 (Acbd7) (Mus musculus (Mouse)).